A 151-amino-acid polypeptide reads, in one-letter code: Aspartate carbamoyltransferase regulatory chain (151 aa).

Positions 108, 113, 138, and 141 each coordinate Zn(2+).

This sequence belongs to the PyrI family. As to quaternary structure, contains catalytic and regulatory chains. Zn(2+) serves as cofactor.

Its function is as follows. Involved in allosteric regulation of aspartate carbamoyltransferase. The protein is Aspartate carbamoyltransferase regulatory chain of Pyrobaculum neutrophilum (strain DSM 2338 / JCM 9278 / NBRC 100436 / V24Sta) (Thermoproteus neutrophilus).